Here is a 376-residue protein sequence, read N- to C-terminus: 1-acyl-sn-glycerol-3-phosphate acyltransferase gamma (376 aa).

The Cytoplasmic portion of the chain corresponds to 1-124; the sequence is MGLLAFLKTQ…LGSSKVLAKK (124 aa). An HXXXXD motif motif is present at residues 96–101; it reads HNFEID. The helical transmembrane segment at 125–145 threads the bilayer; sequence ELLYVPLIGWTWYFLEIVFCK. The Lumenal portion of the chain corresponds to 146-316; the sequence is RKWEEDRDTV…TLLNFLSWAT (171 aa). A helical membrane pass occupies residues 317–339; sequence ILLSPLFSFVLGVFASGSPLLIL. Residues 340–376 are Cytoplasmic-facing; it reads TFLGFVGAASFGVRRLIGVTEIEKGSSYGNQEFKKKE.

It belongs to the 1-acyl-sn-glycerol-3-phosphate acyltransferase family. As to expression, widely expressed with highest levels in testis, pancreas and kidney, followed by spleen, lung, adipose tissue and liver.

It localises to the endoplasmic reticulum membrane. The protein localises to the nucleus envelope. The catalysed reaction is a 1-acyl-sn-glycero-3-phosphate + an acyl-CoA = a 1,2-diacyl-sn-glycero-3-phosphate + CoA. It carries out the reaction pentadecanoyl-CoA + 1-(9Z-octadecenoyl)-sn-glycero-3-phosphate = 1-(9Z)-octadecenoyl-2-pentadecanoyl-sn-glycero-3-phosphate + CoA. It catalyses the reaction heptadecanoyl-CoA + 1-(9Z-octadecenoyl)-sn-glycero-3-phosphate = 1-(9Z)-octadecenoyl-2-heptadecanoyl-sn-glycero-3-phosphate + CoA. The enzyme catalyses 1-(9Z-octadecenoyl)-sn-glycero-3-phosphate + octadecanoyl-CoA = 1-(9Z-octadecenoyl)-2-octadecanoyl-sn-glycero-3-phosphate + CoA. The catalysed reaction is nonadecanoyl-CoA + 1-(9Z-octadecenoyl)-sn-glycero-3-phosphate = 1-(9Z)-octadecenoyl-2-nonadecanoyl-sn-glycero-3-phosphate + CoA. It carries out the reaction 1-(9Z-octadecenoyl)-sn-glycero-3-phosphate + (5Z,8Z,11Z,14Z)-eicosatetraenoyl-CoA = 1-(9Z)-octadecenoyl-2-(5Z,8Z,11Z,14Z)-eicosatetraenoyl-sn-glycero-3-phosphate + CoA. It catalyses the reaction 1-(9Z-octadecenoyl)-sn-glycero-3-phosphate + (9Z)-octadecenoyl-CoA = 1,2-di-(9Z-octadecenoyl)-sn-glycero-3-phosphate + CoA. The enzyme catalyses 1-(9Z-octadecenoyl)-sn-glycero-3-phosphate + (9Z,12Z)-octadecadienoyl-CoA = 1-(9Z)-octadecenoyl-2-(9Z,12Z)-octadecadienoyl-sn-glycero-3-phosphate + CoA. The catalysed reaction is 1-(9Z-octadecenoyl)-sn-glycero-3-phosphocholine + (5Z,8Z,11Z,14Z)-eicosatetraenoyl-CoA = 1-(9Z)-octadecenoyl-2-(5Z,8Z,11Z,14Z)-icosatetraenoyl-sn-glycero-3-phosphocholine + CoA. It carries out the reaction 1-(9Z-octadecenoyl)-sn-glycero-3-phospho-(1D-myo-inositol) + (5Z,8Z,11Z,14Z)-eicosatetraenoyl-CoA = 1-(9Z-octadecenoyl)-2-(5Z,8Z,11Z,14Z-eicosatetraenoyl)-sn-glycero-3-phospho-1D-myo-inositol + CoA. It catalyses the reaction 1-(9Z-octadecenoyl)-sn-glycero-3-phospho-L-serine + (5Z,8Z,11Z,14Z)-eicosatetraenoyl-CoA = 1-(9Z-octadecenoyl)-2-(5Z,8Z,11Z,14Z-eicosatetraenoyl)-sn-glycero-3-phospho-L-serine + CoA. The enzyme catalyses 1-hexadecanoyl-sn-glycero-3-phosphate + (9Z)-octadecenoyl-CoA = 1-hexadecanoyl-2-(9Z-octadecenoyl)-sn-glycero-3-phosphate + CoA. The catalysed reaction is 1-hexadecanoyl-sn-glycero-3-phosphate + (5Z,8Z,11Z,14Z)-eicosatetraenoyl-CoA = 1-hexadecanoyl-2-(5Z,8Z,11Z,14Z-eicosatetraenoyl)-sn-glycero-3-phosphate + CoA. It carries out the reaction 1-heptadecanoyl-sn-glycero-3-phosphate + (5Z,8Z,11Z,14Z)-eicosatetraenoyl-CoA = 1-heptadecanoyl-2-(5Z,8Z,11Z,14Z)-eicosatetraenoyl-sn-glycero-3-phosphate + CoA. It catalyses the reaction 1-octadecanoyl-sn-glycero-3-phosphate + (9Z)-octadecenoyl-CoA = 1-octadecanoyl-2-(9Z-octadecenoyl)-sn-glycero-3-phosphate + CoA. The enzyme catalyses 1-octadecanoyl-sn-glycero-3-phosphate + (5Z,8Z,11Z,14Z)-eicosatetraenoyl-CoA = 1-octadecanoyl-2-(5Z,8Z,11Z,14Z-eicosatetraenoyl)-sn-glycero-3-phosphate + CoA. The catalysed reaction is 1-(9Z-octadecenoyl)-sn-glycero-3-phosphate + hexadecanoyl-CoA = 1-hexadecanoyl-2-(9Z-octadecenoyl)-sn-glycero-3-phosphate + CoA. It carries out the reaction 1-O-(9Z-octadecenyl)-sn-glycero-3-phosphate + (5Z,8Z,11Z,14Z)-eicosatetraenoyl-CoA = 1-O-(9Z-octadecenyl)-2-(5Z,8Z,11Z,14Z-eicosatetraenoyl)-sn-glycero-3-phosphate + CoA. It catalyses the reaction a 1-acyl-sn-glycero-3-phospho-(1D-myo-inositol) + (5Z,8Z,11Z,14Z)-eicosatetraenoyl-CoA = a 1-acyl-2-(5Z,8Z,11Z,14Z-eicosatetraenoyl)-sn-glycero-3-phospho-(1D-myo-inositol) + CoA. It functions in the pathway phospholipid metabolism; CDP-diacylglycerol biosynthesis; CDP-diacylglycerol from sn-glycerol 3-phosphate: step 2/3. Its function is as follows. Converts 1-acyl-sn-glycerol-3-phosphate (lysophosphatidic acid or LPA) into 1,2-diacyl-sn-glycerol-3-phosphate (phosphatidic acid or PA) by incorporating an acyl moiety at the sn-2 position of the glycerol backbone. Acts on LPA containing saturated or unsaturated fatty acids C16:0-C20:4 at the sn-1 position using C18:1, C20:4 or C18:2-CoA as the acyl donor. Also acts on lysophosphatidylcholine, lysophosphatidylinositol and lysophosphatidylserine using C18:1 or C20:4-CoA. Has a preference for arachidonoyl-CoA as a donor. Also has a modest lysophosphatidylinositol acyltransferase (LPIAT) activity, converts lysophosphatidylinositol (LPI) into phosphatidylinositol. The protein is 1-acyl-sn-glycerol-3-phosphate acyltransferase gamma (AGPAT3) of Homo sapiens (Human).